The chain runs to 348 residues: Neuronal growth regulator 1 (348 aa).

The signal sequence occupies residues 1–31 (MVLLAQGACCSNQWLAAVLLSLCSCLPAGQS). Ig-like C2-type domains are found at residues 32–128 (VDFP…VHLT), 133–215 (PKIY…RVVV), and 219–307 (PTIQ…LPLN). A disulfide bridge connects residues C54 and C112. N-linked (GlcNAc...) asparagine glycans are attached at residues N67 and N149. Disulfide bonds link C154–C197 and C239–C291. Y181 is subject to Phosphotyrosine. N-linked (GlcNAc...) asparagine glycans are attached at residues N269, N280, N288, and N301. A lipid anchor (GPI-anchor amidated glycine) is attached at G318. Residues 319-348 (SACDLFSCWSLALTLSSVISIFYLKNAILQ) constitute a propeptide, removed in mature form.

It belongs to the immunoglobulin superfamily. IgLON family. In terms of processing, glycosylated. In terms of tissue distribution, highly expressed in brain.

The protein resides in the cell membrane. In terms of biological role, may be involved in cell-adhesion. May function as a trans-neural growth-promoting factor in regenerative axon sprouting in the mammalian brain. This Rattus norvegicus (Rat) protein is Neuronal growth regulator 1 (Negr1).